A 345-amino-acid polypeptide reads, in one-letter code: KRR1 small subunit processome component homolog (345 aa).

In terms of domain architecture, KH spans 125-193 (DIIKIGNLVH…VRDIVLETMN (69 aa)). A compositionally biased stretch (basic residues) spans 232 to 245 (NISKRKQPKVKKQK). 2 disordered regions span residues 232–260 (NISK…ESKV) and 273–329 (QEQK…VDVK). Residues 270-298 (FLNQEQKQAKRNQERTEKQKEAAKRQDER) adopt a coiled-coil conformation. Basic and acidic residues-rich tracts occupy residues 276–302 (KQAK…RNKD) and 315–329 (LKKE…VDVK).

This sequence belongs to the KRR1 family. In terms of assembly, monomer. Component of the ribosomal small subunit (SSU) processome.

Its subcellular location is the nucleus. It is found in the nucleolus. Its function is as follows. Required for 40S ribosome biogenesis. Involved in nucleolar processing of pre-18S ribosomal RNA and ribosome assembly. Binds to RNA. Required for female germline development, cell viability during eye development and for survival of dividing cells and epithelial cells during early wing disk development. This is KRR1 small subunit processome component homolog from Drosophila erecta (Fruit fly).